A 208-amino-acid chain; its full sequence is NAD(P)H-quinone oxidoreductase subunit I (208 aa).

2 consecutive 4Fe-4S ferredoxin-type domains span residues glycine 55–valine 84 and arginine 95–glutamate 124. Residues cysteine 64, cysteine 67, cysteine 70, cysteine 74, cysteine 104, cysteine 107, cysteine 110, and cysteine 114 each coordinate [4Fe-4S] cluster.

Belongs to the complex I 23 kDa subunit family. In terms of assembly, NDH-1 is composed of at least 11 different subunits. Requires [4Fe-4S] cluster as cofactor.

It is found in the cellular thylakoid membrane. It carries out the reaction a plastoquinone + NADH + (n+1) H(+)(in) = a plastoquinol + NAD(+) + n H(+)(out). It catalyses the reaction a plastoquinone + NADPH + (n+1) H(+)(in) = a plastoquinol + NADP(+) + n H(+)(out). Functionally, NDH-1 shuttles electrons from an unknown electron donor, via FMN and iron-sulfur (Fe-S) centers, to quinones in the respiratory and/or the photosynthetic chain. The immediate electron acceptor for the enzyme in this species is believed to be plastoquinone. Couples the redox reaction to proton translocation, and thus conserves the redox energy in a proton gradient. This is NAD(P)H-quinone oxidoreductase subunit I from Prochlorococcus marinus subsp. pastoris (strain CCMP1986 / NIES-2087 / MED4).